The sequence spans 238 residues: MPHNQQIKKTVVVFSGGQDSTTCLIQALTQYDQVYCITFDYGQRHRAEICIARRLTITLGAYDHQIIDTSALNVLAASSLTRENIIVPLAEKNHMNSSLSTFVPGRNIVFLTLAAIYAYQVKAEVIITGVCETDFSGYPDCREKFIQALNKAVNLGMAYNIHFISPLMWLNKAETWALADYYQKLDLVCNETLTCYNGIQGKGCGFCTSCSLRARGLETYKQQPKLTMSSLKAKTGLP.

An ATP-binding site is contributed by 14–24; sequence FSGGQDSTTCL. The Zn(2+) site is built by Cys195, Cys204, Cys207, and Cys210.

It belongs to the QueC family. Zn(2+) is required as a cofactor.

The catalysed reaction is 7-carboxy-7-deazaguanine + NH4(+) + ATP = 7-cyano-7-deazaguanine + ADP + phosphate + H2O + H(+). The protein operates within purine metabolism; 7-cyano-7-deazaguanine biosynthesis. Functionally, catalyzes the ATP-dependent conversion of 7-carboxy-7-deazaguanine (CDG) to 7-cyano-7-deazaguanine (preQ(0)). In Baumannia cicadellinicola subsp. Homalodisca coagulata, this protein is 7-cyano-7-deazaguanine synthase.